Consider the following 155-residue polypeptide: Chaperone protein IpgC (155 aa).

The protein belongs to the LcrH/SycD chaperone family.

It is found in the cytoplasm. Functionally, assists the correct folding of nascent IpaB. Once it is bound to IpaB, it binds to IpaC and impedes their premature association that would lead to their degradation in the absence of IpcG. This is Chaperone protein IpgC (ipgC) from Shigella dysenteriae.